The following is a 91-amino-acid chain: Large ribosomal subunit protein uL23 (91 aa).

It belongs to the universal ribosomal protein uL23 family. Part of the 50S ribosomal subunit. Contacts protein L29, and trigger factor when it is bound to the ribosome.

Its function is as follows. One of the early assembly proteins it binds 23S rRNA. One of the proteins that surrounds the polypeptide exit tunnel on the outside of the ribosome. Forms the main docking site for trigger factor binding to the ribosome. The chain is Large ribosomal subunit protein uL23 from Staphylococcus saprophyticus subsp. saprophyticus (strain ATCC 15305 / DSM 20229 / NCIMB 8711 / NCTC 7292 / S-41).